Here is a 167-residue protein sequence, read N- to C-terminus: Calcium-binding protein CML19 (167 aa).

EF-hand domains follow at residues 23–58, 59–94, 96–131, and 132–167; these read QKRREIREIFDLFDIDGSGSIDASELNVAMRSLGFE, MNNQQINELMAEVDKNQSGAIDFDEFVHMMTTKFGE, DSIDELSKAFKIIDHDNNGKISPRDIKMIAKELGEN, and FTDNDIEEMIEEADRDKDGEVNLEEFMKMMKRTSYG. Residues Asp-36, Asp-38, Ser-40, Ser-42, Glu-47, Asp-72, Asn-74, Ser-76, Glu-83, Asp-109, Asp-111, Asn-113, Lys-115, Asp-120, Asp-145, Asp-147, Asp-149, Glu-151, and Glu-156 each coordinate Ca(2+).

Belongs to the centrin family. As to quaternary structure, interacts with RAD4. Calcium is required for this interaction. Interacts with SAC3B. As to expression, expressed in leaves, roots, and at lower level in stems. Barely detectable in flower buds and flowers.

Its subcellular location is the cytoplasm. The protein resides in the nucleus. In terms of biological role, potential calcium sensor that binds calcium in vitro. Modulates homologous recombination and nucleotide excision repair (NER). Involved in the early response to UV irradiation. In Arabidopsis thaliana (Mouse-ear cress), this protein is Calcium-binding protein CML19.